The primary structure comprises 230 residues: Ribonuclease 3 (230 aa).

The RNase III domain maps to 10 to 133; the sequence is DPRLQSRIGY…IIGAIYVDSN (124 aa). E46 contributes to the Mg(2+) binding site. Residue D50 is part of the active site. Mg(2+)-binding residues include D119 and E122. E122 is a catalytic residue. Positions 161–230 constitute a DRBM domain; the sequence is DPKSRLQEYL…AAEILKLLEQ (70 aa).

The protein belongs to the ribonuclease III family. As to quaternary structure, homodimer. Requires Mg(2+) as cofactor.

It is found in the cytoplasm. The catalysed reaction is Endonucleolytic cleavage to 5'-phosphomonoester.. Digests double-stranded RNA. Involved in the processing of primary rRNA transcript to yield the immediate precursors to the large and small rRNAs (23S and 16S). Processes some mRNAs, and tRNAs when they are encoded in the rRNA operon. Processes pre-crRNA and tracrRNA of type II CRISPR loci if present in the organism. The sequence is that of Ribonuclease 3 from Acinetobacter baylyi (strain ATCC 33305 / BD413 / ADP1).